A 429-amino-acid polypeptide reads, in one-letter code: tRNA(Ile2) 2-agmatinylcytidine synthetase TiaS (429 aa).

Residues 271–343 (VRGKVIKKYW…LTLNLEKFYP (73 aa)) constitute a DNA-binding region (OB).

Belongs to the TiaS family.

It is found in the cytoplasm. It carries out the reaction cytidine(34) in tRNA(Ile2) + agmatine + ATP + H2O = 2-agmatinylcytidine(34) in tRNA(Ile2) + AMP + 2 phosphate + 2 H(+). ATP-dependent agmatine transferase that catalyzes the formation of 2-agmatinylcytidine (agm2C) at the wobble position (C34) of tRNA(Ile2), converting the codon specificity from AUG to AUA. This Thermococcus sibiricus (strain DSM 12597 / MM 739) protein is tRNA(Ile2) 2-agmatinylcytidine synthetase TiaS.